A 98-amino-acid chain; its full sequence is NADH-ubiquinone oxidoreductase chain 4L (98 aa).

3 consecutive transmembrane segments (helical) span residues 1–21 (MSLV…GLLM), 29–49 (ALLC…LTIL), and 61–81 (IILL…LVMV).

This sequence belongs to the complex I subunit 4L family. As to quaternary structure, core subunit of respiratory chain NADH dehydrogenase (Complex I) which is composed of 45 different subunits.

The protein resides in the mitochondrion inner membrane. It carries out the reaction a ubiquinone + NADH + 5 H(+)(in) = a ubiquinol + NAD(+) + 4 H(+)(out). Functionally, core subunit of the mitochondrial membrane respiratory chain NADH dehydrogenase (Complex I) which catalyzes electron transfer from NADH through the respiratory chain, using ubiquinone as an electron acceptor. Part of the enzyme membrane arm which is embedded in the lipid bilayer and involved in proton translocation. The protein is NADH-ubiquinone oxidoreductase chain 4L (MT-ND4L) of Lagenorhynchus albirostris (White-beaked dolphin).